The sequence spans 436 residues: Voltage-gated purine nucleotide uniporter SLC17A9 (436 aa).

10 helical membrane-spanning segments follow: residues 64–84 (IVLSSFFWGYCLTQVVGGHLG), 92–112 (VILLSASAWGSITAVTPLLAH), 118–138 (LAFMTFSRILMGLLQGVYFPA), 158–178 (IVGAGSQFGTLLTGAVGSLLL), 181–201 (YGWQSIFYFSGGLTLLWVWYV), 239–259 (PAVWAAVVSQLSAACSFFILL), 276–296 (WIFNVVPWLVAIPASLFSGFL), 316–336 (GMGLGLSSVFALCLGHTSSFC), 369–389 (GFLFGVANTAGALAGVVGVCL), and 402–422 (CLFNLVAIISNLGLCTFLVFG).

This sequence belongs to the major facilitator superfamily. Sodium/anion cotransporter family. As to expression, widely expressed, but more predominantly in adrenal gland, brain and thyroid.

It is found in the cytoplasmic vesicle. Its subcellular location is the secretory vesicle. It localises to the chromaffin granule membrane. The protein resides in the secretory vesicle membrane. The protein localises to the lysosome membrane. The catalysed reaction is ATP(in) = ATP(out). It catalyses the reaction ADP(in) = ADP(out). It carries out the reaction GTP(in) = GTP(out). Its activity is regulated as follows. Activity is chloride-dependent. Inhibited by AMP-PNP, gammaS-ATP, diadenosine triphosphate, 4,4'- diisothiocyanatostilbene-2,2'-disulfonate (DIDS) and Evans blue. Its function is as follows. Voltage-gated ATP nucleotide uniporter that can also transport the purine nucleotides ADP and GTP. Uses the membrane potential as the driving force to control ATP accumulation in lysosomes and secretory vesicles. By controlling ATP storage in lysosomes, regulates ATP-dependent proteins of these organelles. Also indirectly regulates the exocytosis of ATP through its import into lysosomes in astrocytes and secretory vesicles such as adrenal chromaffin granules, mucin granules and synaptic vesicles. This Homo sapiens (Human) protein is Voltage-gated purine nucleotide uniporter SLC17A9.